Consider the following 400-residue polypeptide: Multidrug resistance protein MdtH (400 aa).

The next 10 helical transmembrane spans lie at 13–33 (YFLLLDNMLVVLGFFVVFPLI), 34–54 (SIRFVEQLGWAGVIVGFALGL), 99–116 (PWILWLSCILSALGGTLF), 139–159 (LLLMQDSAGAVIGALIGSWLL), 165–185 (LVCWVGAGIFVLAAIFNAWLL), 214–234 (VLTLTGYFVLSVQVMLMFPIV), 244–264 (AVKWMYAIEALLSLTLLYPIA), 289–309 (FPVGITHSLHAIFLIITLFYL), 340–360 (LGLAFGGAIGYTGGGWMYDIG), and 365–385 (LPELPWFLLGSIGFITLYALH).

The protein belongs to the major facilitator superfamily. DHA1 family. MdtH (TC 2.A.1.2.21) subfamily.

It localises to the cell inner membrane. This Proteus mirabilis (strain HI4320) protein is Multidrug resistance protein MdtH.